Reading from the N-terminus, the 204-residue chain is Protein C (204 aa).

The segment at 1–78 (MPSFLRGILK…TEQSQRRPKI (78 aa)) is disordered. Residues 10-20 (KPKERHHENKN) are compositionally biased toward basic and acidic residues. Over residues 25–34 (SSDSLTSSYP) the composition is skewed to low complexity.

The protein belongs to the respirovirus protein C family.

This Homo sapiens (Human) protein is Protein C (P/V/C).